Reading from the N-terminus, the 376-residue chain is E3 ubiquitin-protein ligase RNF133 (376 aa).

In terms of domain architecture, PA spans 65-167; the sequence is SSTLKRVAGV…LKGTEIFHLI (103 aa). The helical transmembrane segment at 190-210 threads the bilayer; it reads YLVSFVIVTTATLAYFIFYHI. The RING-type; atypical zinc finger occupies 256–297; it reads CVICFERYKPNDIVRILTCKHFFHKNCIDPWILPHGTCPICK. Residues 327–376 form a disordered region; sequence ETLSPSEEETNNEVSPAGTSDKVIHVEENPTSQNNDIQPHSVVEDVHPSP. Over residues 355-364 the composition is skewed to polar residues; the sequence is NPTSQNNDIQ.

In terms of assembly, interacts with E3 ligase UBE2J1. Auto-ubiquitinated. In terms of tissue distribution, expression is testis-specific.

It is found in the endoplasmic reticulum membrane. The catalysed reaction is S-ubiquitinyl-[E2 ubiquitin-conjugating enzyme]-L-cysteine + [acceptor protein]-L-lysine = [E2 ubiquitin-conjugating enzyme]-L-cysteine + N(6)-ubiquitinyl-[acceptor protein]-L-lysine.. It functions in the pathway protein modification; protein ubiquitination. Has E3 ubiquitin-protein ligase activity. Plays a role in male fecundity through the interaction with the E2 ubituitin-protein ligase UBE2J1. The polypeptide is E3 ubiquitin-protein ligase RNF133 (Homo sapiens (Human)).